Here is a 276-residue protein sequence, read N- to C-terminus: Borealin (276 aa).

The segment at 111 to 158 is disordered; the sequence is KEAKSSANSEDENMAPLKSTMKKKKASKKAPSTSKKPRTLSISKQGGT.

Belongs to the borealin family. In terms of assembly, component of the CPC complex.

It localises to the nucleus. The protein localises to the chromosome. It is found in the centromere. The protein resides in the cytoplasm. Its subcellular location is the cytoskeleton. It localises to the spindle. Functionally, component of the chromosomal passenger complex (CPC), a complex that acts as a key regulator of mitosis. The CPC complex has essential functions at the centromere in ensuring correct chromosome alignment and segregation and is required for chromatin-induced microtubule stabilization and spindle assembly. This is Borealin (cdca8) from Danio rerio (Zebrafish).